Here is a 329-residue protein sequence, read N- to C-terminus: Glycerol-3-phosphate dehydrogenase [NAD(P)+] (329 aa).

NADPH is bound by residues Ser13, Trp14, His34, and Lys105. Residues Lys105, Gly134, and Ser136 each contribute to the sn-glycerol 3-phosphate site. Ala138 is a binding site for NADPH. 5 residues coordinate sn-glycerol 3-phosphate: Lys189, Asp242, Ser252, Arg253, and Asn254. Lys189 functions as the Proton acceptor in the catalytic mechanism. Position 253 (Arg253) interacts with NADPH. 2 residues coordinate NADPH: Val277 and Glu279.

This sequence belongs to the NAD-dependent glycerol-3-phosphate dehydrogenase family.

The protein resides in the cytoplasm. The enzyme catalyses sn-glycerol 3-phosphate + NAD(+) = dihydroxyacetone phosphate + NADH + H(+). The catalysed reaction is sn-glycerol 3-phosphate + NADP(+) = dihydroxyacetone phosphate + NADPH + H(+). The protein operates within membrane lipid metabolism; glycerophospholipid metabolism. In terms of biological role, catalyzes the reduction of the glycolytic intermediate dihydroxyacetone phosphate (DHAP) to sn-glycerol 3-phosphate (G3P), the key precursor for phospholipid synthesis. The protein is Glycerol-3-phosphate dehydrogenase [NAD(P)+] of Legionella pneumophila (strain Lens).